Here is a 227-residue protein sequence, read N- to C-terminus: PKHD-type hydroxylase Bxeno_B2756 (227 aa).

Residues 80–179 (QVYPPLFNRY…RVASFFWVQS (100 aa)) form the Fe2OG dioxygenase domain. Residues histidine 98, aspartate 100, and histidine 160 each coordinate Fe cation. A 2-oxoglutarate-binding site is contributed by arginine 170.

Requires Fe(2+) as cofactor. The cofactor is L-ascorbate.

The chain is PKHD-type hydroxylase Bxeno_B2756 from Paraburkholderia xenovorans (strain LB400).